We begin with the raw amino-acid sequence, 229 residues long: General odorant-binding protein 69 (229 aa).

A signal peptide spans 1–20 (MDRLLLVLLSSASLLLTVYG). The cysteines at positions 66 and 106 are disulfide-linked.

Belongs to the PBP/GOBP family.

The protein localises to the secreted. Its function is as follows. Present in the aqueous fluid surrounding olfactory sensory dendrites and are thought to aid in the capture and transport of hydrophobic odorants into and through this fluid. This Anopheles gambiae (African malaria mosquito) protein is General odorant-binding protein 69 (Obp69).